The chain runs to 148 residues: Oleosin 16 kDa (148 aa).

The segment at 1–21 (MADQHRGVIGGGGYGDRGGQE) is disordered. The residue at position 2 (Ala-2) is an N-acetylalanine. A polar region spans residues 2-34 (ADQHRGVIGGGGYGDRGGQEQQEKQPFMMTALK). Over residues 8–17 (VIGGGGYGDR) the composition is skewed to gly residues. Positions 35–106 (TVTAATAGGS…AALSVFSWMY (72 aa)) are hydrophobic. Helical transmembrane passes span 43 to 63 (GSML…LTVA), 66 to 86 (VLVI…LMAA), and 87 to 107 (GFVT…WMYK).

It belongs to the oleosin family.

The protein resides in the lipid droplet. Its subcellular location is the membrane. Functionally, may have a structural role to stabilize the lipid body during desiccation of the seed by preventing coalescence of the oil. Probably interacts with both lipid and phospholipid moieties of lipid bodies. May also provide recognition signals for specific lipase anchorage in lipolysis during seedling growth. The protein is Oleosin 16 kDa (OLE16) of Oryza sativa subsp. japonica (Rice).